The chain runs to 243 residues: uncharacterized protein (243 aa).

Belongs to the mycobacterial PPE family.

The protein resides in the cell membrane. This is an uncharacterized protein from Mycobacterium tuberculosis (strain CDC 1551 / Oshkosh).